Here is a 290-residue protein sequence, read N- to C-terminus: ATP synthase gamma chain (290 aa).

Belongs to the ATPase gamma chain family. As to quaternary structure, F-type ATPases have 2 components, CF(1) - the catalytic core - and CF(0) - the membrane proton channel. CF(1) has five subunits: alpha(3), beta(3), gamma(1), delta(1), epsilon(1). CF(0) has three main subunits: a, b and c.

The protein localises to the cell inner membrane. In terms of biological role, produces ATP from ADP in the presence of a proton gradient across the membrane. The gamma chain is believed to be important in regulating ATPase activity and the flow of protons through the CF(0) complex. This is ATP synthase gamma chain from Paracoccus denitrificans (strain Pd 1222).